The sequence spans 195 residues: ATP-dependent Clp protease proteolytic subunit (195 aa).

The active-site Nucleophile is Ser-98. The active site involves His-123.

Belongs to the peptidase S14 family. In terms of assembly, fourteen ClpP subunits assemble into 2 heptameric rings which stack back to back to give a disk-like structure with a central cavity, resembling the structure of eukaryotic proteasomes.

The protein resides in the cytoplasm. It carries out the reaction Hydrolysis of proteins to small peptides in the presence of ATP and magnesium. alpha-casein is the usual test substrate. In the absence of ATP, only oligopeptides shorter than five residues are hydrolyzed (such as succinyl-Leu-Tyr-|-NHMec, and Leu-Tyr-Leu-|-Tyr-Trp, in which cleavage of the -Tyr-|-Leu- and -Tyr-|-Trp bonds also occurs).. In terms of biological role, cleaves peptides in various proteins in a process that requires ATP hydrolysis. Has a chymotrypsin-like activity. Plays a major role in the degradation of misfolded proteins. The protein is ATP-dependent Clp protease proteolytic subunit of Thermoanaerobacter pseudethanolicus (strain ATCC 33223 / 39E) (Clostridium thermohydrosulfuricum).